We begin with the raw amino-acid sequence, 150 residues long: Large ribosomal subunit protein bL9 (150 aa).

Belongs to the bacterial ribosomal protein bL9 family.

Binds to the 23S rRNA. This is Large ribosomal subunit protein bL9 from Corynebacterium efficiens (strain DSM 44549 / YS-314 / AJ 12310 / JCM 11189 / NBRC 100395).